A 640-amino-acid chain; its full sequence is 1,4-alpha-glucan branching enzyme GlgB (640 aa).

Asp-318 functions as the Nucleophile in the catalytic mechanism. The Proton donor role is filled by Glu-371.

Belongs to the glycosyl hydrolase 13 family. GlgB subfamily. As to quaternary structure, monomer.

The catalysed reaction is Transfers a segment of a (1-&gt;4)-alpha-D-glucan chain to a primary hydroxy group in a similar glucan chain.. The protein operates within glycan biosynthesis; glycogen biosynthesis. Functionally, catalyzes the formation of the alpha-1,6-glucosidic linkages in glycogen by scission of a 1,4-alpha-linked oligosaccharide from growing alpha-1,4-glucan chains and the subsequent attachment of the oligosaccharide to the alpha-1,6 position. The sequence is that of 1,4-alpha-glucan branching enzyme GlgB from Francisella tularensis subsp. mediasiatica (strain FSC147).